The sequence spans 284 residues: Tropomyosin (284 aa).

Residues 1 to 284 (MDGIKKKMIA…DQTFAELTGY (284 aa)) adopt a coiled-coil conformation. The interval 111 to 131 (TKLEEASKTAEESERGRKDLE) is disordered.

This sequence belongs to the tropomyosin family. As to quaternary structure, homodimer.

Tropomyosin, in association with the troponin complex, plays a central role in the calcium dependent regulation of muscle contraction. This is Tropomyosin from Schistosoma haematobium (Blood fluke).